A 132-amino-acid chain; its full sequence is Small ribosomal subunit protein uS8 (132 aa).

This sequence belongs to the universal ribosomal protein uS8 family. Part of the 30S ribosomal subunit. Contacts proteins S5 and S12.

Its function is as follows. One of the primary rRNA binding proteins, it binds directly to 16S rRNA central domain where it helps coordinate assembly of the platform of the 30S subunit. The chain is Small ribosomal subunit protein uS8 from Listeria innocua serovar 6a (strain ATCC BAA-680 / CLIP 11262).